The sequence spans 978 residues: MASFFSDFGLMWYLEELNKKEFMKFKELLQQEILQLGLKHISWTEVKKASREDLANLLLKHYEEKKAWDMTFKIFQKMNRQDLMERAGREIAGHSKLYQVHLKKKLTHDYARKFNIKDQDSLKQKFTQDDCDHFENLLISKATGKKPHMVFLQGVAGIGKSLMLTKLMLAWSEGMVFQNKFSYIFYFCCQDVKKMKRASLAELISKEWPNASAPIEEILSQPEKLLFVIDNLEVMECDMSEWESELCDDCMEKQPVNILMSSLLRRKMLPESSFLVSATPETFEKIEDRIECTNVKMMAGFNESSIKVYFYSLFQDRNRTQEIFSLVRENEQLFSVCQVPVLCWMVATCLKKEIEKGRDPVSICRRITSLYTTYIFNLFIPHSAQYPSKKSQDQLQGLCSLAAEGMWTDTFVFAEEALRRNGIMDSDISTLLDVRILEKSKESEKSYIFLHPSIQEVCAAIFHLLKSHVDHPSQDVKSIEALIFTFLKKVKIQWIFFGSFIFGLLHESEQKKLEAFFGHQLSQEIKRQLYQCLETISGNKELQEQIDGMKLFYCLFEMDDEAFLPQVMNCMEQIKFVAKDYSDVIVAAHCLQHCSTLKKLSLSTQNILSEGQEHSYTEKLLICWHHVCSVLTSSKDIHVLQVKDTNFNERAFLVLYSHLKYPSCILKVLEVNNVTLLCDNRLLFELIQNQRLQLLNLSLTFLSHNDVKLLCDVLNQAECNIEKLMVADCNLSPDDCKVFVSVLISSKMLKHLNLSSNNLDKGISSLSKALCHPDCVLKNLVLAKCSLSEECWHYLSEVLRRNKTLTHLDISFNDLKDEGLKVLCGALTLPDSVLISLSVRYCLITTSGCQDLAEVLRNNQNLRNLQISNNKIEDAGVKLLCDAIKHPNCHLENIGLEACALTGACCEDLASSFTHCKTLLGINLQENALDHSGLVALFEAMKQQQCTVNLRGLRITDFDKETQEFLMAEKEKNPYLSI.

The Pyrin domain maps to 1 to 93; it reads MASFFSDFGL…MERAGREIAG (93 aa). An NACHT domain is found at 148–471; it reads HMVFLQGVAG…FHLLKSHVDH (324 aa). 154–161 contributes to the ATP binding site; sequence GVAGIGKS. 6 LRR repeats span residues 594–617, 694–717, 746–773, 802–825, 859–882, and 916–940; these read CSTL…HSYT, LLNL…LNQA, SKML…LCHP, NKTL…VLCG, NQNL…LLCD, and CKTL…LFEA.

This sequence belongs to the NLRP family.

May be involved in inflammation and recognition of cytosolic pathogen-associated molecular patterns (PAMPs) not intercepted by membrane-bound receptors. This is NACHT, LRR and PYD domains-containing protein 4E (Nlrp4e) from Mus musculus (Mouse).